A 266-amino-acid chain; its full sequence is 3',5'-cyclic-nucleotide phosphodiesterase alr5338 (266 aa).

Fe cation-binding residues include Asp14, His16, Asp56, Asn86, His155, His194, and His196. AMP is bound by residues His16, Asp56, and 86–87 (NH). An AMP-binding site is contributed by His196.

It belongs to the cyclic nucleotide phosphodiesterase class-III family. It depends on Fe(2+) as a cofactor. Mn(2+) serves as cofactor.

The enzyme catalyses a nucleoside 3',5'-cyclic phosphate + H2O = a nucleoside 5'-phosphate + H(+). It carries out the reaction 3',5'-cyclic AMP + H2O = AMP + H(+). The catalysed reaction is 3',5'-cyclic GMP + H2O = GMP + H(+). With respect to regulation, activated by iron and manganese. Hydrolyzes cAMP to 5'-AMP. Plays an important regulatory role in modulating the intracellular concentration of cAMP, thereby influencing cAMP-dependent processes. Can also hydrolyze cGMP. The sequence is that of 3',5'-cyclic-nucleotide phosphodiesterase alr5338 from Nostoc sp. (strain PCC 7120 / SAG 25.82 / UTEX 2576).